The chain runs to 170 residues: Cyclic pyranopterin monophosphate synthase (170 aa).

Substrate contacts are provided by residues L89–H91 and M125–E126. Residue D140 is part of the active site.

Belongs to the MoaC family. Homohexamer; trimer of dimers.

The enzyme catalyses (8S)-3',8-cyclo-7,8-dihydroguanosine 5'-triphosphate = cyclic pyranopterin phosphate + diphosphate. Its pathway is cofactor biosynthesis; molybdopterin biosynthesis. Its function is as follows. Catalyzes the conversion of (8S)-3',8-cyclo-7,8-dihydroguanosine 5'-triphosphate to cyclic pyranopterin monophosphate (cPMP). The sequence is that of Cyclic pyranopterin monophosphate synthase from Streptomyces avermitilis (strain ATCC 31267 / DSM 46492 / JCM 5070 / NBRC 14893 / NCIMB 12804 / NRRL 8165 / MA-4680).